A 272-amino-acid polypeptide reads, in one-letter code: L-aspartate dehydrogenase (272 aa).

Ala125 and Asn192 together coordinate NAD(+). The active site involves His222.

Belongs to the L-aspartate dehydrogenase family.

The enzyme catalyses L-aspartate + NADP(+) + H2O = oxaloacetate + NH4(+) + NADPH + H(+). The catalysed reaction is L-aspartate + NAD(+) + H2O = oxaloacetate + NH4(+) + NADH + H(+). It functions in the pathway cofactor biosynthesis; NAD(+) biosynthesis; iminoaspartate from L-aspartate (dehydrogenase route): step 1/1. Functionally, specifically catalyzes the NAD or NADP-dependent dehydrogenation of L-aspartate to iminoaspartate. This chain is L-aspartate dehydrogenase, found in Nitrosopumilus maritimus (strain SCM1).